The chain runs to 207 residues: Uracil phosphoribosyltransferase (207 aa).

Residues Arg-77, Arg-102, and 129-137 (DPMLATGGS) each bind 5-phospho-alpha-D-ribose 1-diphosphate. Uracil contacts are provided by residues Ile-192 and 197 to 199 (GDA). Residue Asp-198 coordinates 5-phospho-alpha-D-ribose 1-diphosphate.

This sequence belongs to the UPRTase family. The cofactor is Mg(2+).

The catalysed reaction is UMP + diphosphate = 5-phospho-alpha-D-ribose 1-diphosphate + uracil. Its pathway is pyrimidine metabolism; UMP biosynthesis via salvage pathway; UMP from uracil: step 1/1. Allosterically activated by GTP. In terms of biological role, catalyzes the conversion of uracil and 5-phospho-alpha-D-ribose 1-diphosphate (PRPP) to UMP and diphosphate. In Ureaplasma urealyticum serovar 10 (strain ATCC 33699 / Western), this protein is Uracil phosphoribosyltransferase.